The chain runs to 77 residues: MNRPTMRNTAAVTTDYDREQLRRELNSLRRSVHELCTRSATGFDCNRFLEAGDRAPAVIVKAAANGGQHSSLICDKV.

This is an uncharacterized protein from Orgyia pseudotsugata multicapsid polyhedrosis virus (OpMNPV).